The primary structure comprises 409 residues: Sperm equatorial segment protein 1 (409 aa).

The N-terminal stretch at Met-1 to Leu-18 is a signal peptide. An N-linked (GlcNAc...) asparagine glycan is attached at Asn-132. The interval Glu-141–Thr-223 is disordered. Positions Pro-167–Pro-177 are enriched in acidic residues. Residues Asn-198–Ser-208 show a composition bias toward polar residues. Residues Thr-209–Thr-223 show a composition bias toward low complexity.

The protein belongs to the SPESP1 family. In terms of processing, glycosylated. In testis there are two predominant forms of 77- and 67-kDa and a form of 47-kDa, whereas in epididymal sperm from caput, corpus, and cauda there are two forms of 47- and 43-kDa. Testis forms contain complex carbohydrate residues. Epididymal sperm forms are N-glycosylated. Then undergoes significant glycosylation in the testis and that the majority of these glycoconjugates are removed by the time sperm reach the caput epididymis.

Its subcellular location is the cytoplasmic vesicle. The protein resides in the secretory vesicle. It localises to the acrosome. Involved in fertilization ability of sperm. In Rattus norvegicus (Rat), this protein is Sperm equatorial segment protein 1.